The following is a 447-amino-acid chain: Sporulation protein YpeB (447 aa).

This sequence belongs to the YpeB family.

In terms of biological role, required for spore cortex hydrolysis during germination. Appears to be required for either expression, localization, activation or function of SleB. The sequence is that of Sporulation protein YpeB from Oceanobacillus iheyensis (strain DSM 14371 / CIP 107618 / JCM 11309 / KCTC 3954 / HTE831).